The primary structure comprises 230 residues: Dephospho-CoA kinase (230 aa).

The region spanning 3 to 225 is the DPCK domain; it reads IIGLTGGIAT…REGGAICPTP (223 aa). Residue 11–16 participates in ATP binding; the sequence is ATGKST.

It belongs to the CoaE family.

The protein localises to the cytoplasm. It carries out the reaction 3'-dephospho-CoA + ATP = ADP + CoA + H(+). It functions in the pathway cofactor biosynthesis; coenzyme A biosynthesis; CoA from (R)-pantothenate: step 5/5. Its function is as follows. Catalyzes the phosphorylation of the 3'-hydroxyl group of dephosphocoenzyme A to form coenzyme A. This is Dephospho-CoA kinase from Synechococcus sp. (strain JA-3-3Ab) (Cyanobacteria bacterium Yellowstone A-Prime).